Consider the following 367-residue polypeptide: Protein RIC-3 (367 aa).

A signal peptide spans Met-1 to Gly-31. Positions Arg-30 to Phe-67 are disordered. At Lys-32 to Leu-95 the chain is on the lumenal side. The chain crosses the membrane as a helical span at residues Met-96–Phe-116. The Cytoplasmic segment spans residues Lys-117–Glu-367. A coiled-coil region spans residues His-138–Pro-169. N6-acetyllysine; alternate is present on Lys-201. Lys-201 is covalently cross-linked (Glycyl lysine isopeptide (Lys-Gly) (interchain with G-Cter in ubiquitin); alternate). Disordered regions lie at residues Gln-262–Cys-301 and Ala-322–Glu-367. Residues Ser-271–Pro-280 are compositionally biased toward basic and acidic residues. Residues Leu-358–Glu-367 show a composition bias toward basic residues.

It belongs to the ric-3 family. Monomer and homodimer. Interacts with CHRNA7, CHRNA3, CHRNA4, CHRNB2, CHRNB4 and HTR3A. As to expression, expressed in brain, with highest levels in hippocampus, cerebellum and superior colliculus.

It is found in the endoplasmic reticulum membrane. Molecular chaperone which promotes the proper subunit assembly and surface trafficking of alpha-7 (CHRNA7) nicotinic acetylcholine receptor. Promotes the proper subunit assembly and cell surface expression of alpha-8 (CHRNA8) nicotinic acetylcholine receptor. May also promote functional expression of homomeric serotoninergic 5-HT3 receptors, and of heteromeric acetylcholine receptors alpha-3/beta-2, alpha-3/beta-4, alpha-4/beta-2 and alpha-4/beta-4. This is Protein RIC-3 (Ric3) from Mus musculus (Mouse).